Consider the following 831-residue polypeptide: Maltodextrin phosphorylase (831 aa).

Lysine 592 carries the post-translational modification N6-(pyridoxal phosphate)lysine.

The protein belongs to the glycogen phosphorylase family. As to quaternary structure, trimer (at 25 degrees Celsius). Requires pyridoxal 5'-phosphate as cofactor.

The catalysed reaction is [(1-&gt;4)-alpha-D-glucosyl](n) + phosphate = [(1-&gt;4)-alpha-D-glucosyl](n-1) + alpha-D-glucose 1-phosphate. In terms of biological role, phosphorylase is an important allosteric enzyme in carbohydrate metabolism. Catalyzes the phospholytic cleavage of maltodextrins with a minimal chain length of five glucose residues to yield glucose-1-phosphate. Low activity with tetraose and no activity with triose and maltose. Long maltodextrins (8 to 15 glucose units), amylose and starch are not as good substrates as maltoheptaose. This chain is Maltodextrin phosphorylase (malP), found in Thermococcus litoralis (strain ATCC 51850 / DSM 5473 / JCM 8560 / NS-C).